Reading from the N-terminus, the 336-residue chain is Isopentenyl-diphosphate delta-isomerase (336 aa).

5 to 6 lines the substrate pocket; the sequence is RK. Residues 60-62, Ser90, and Asn117 each bind FMN; that span reads AMT. Gln147 contacts substrate. Glu148 provides a ligand contact to Mg(2+). FMN-binding positions include Lys179, Ser204, Thr209, 253–255, and 274–275; these read GVR and SR.

This sequence belongs to the IPP isomerase type 2 family. In terms of assembly, homooctamer. Dimer of tetramers. Requires FMN as cofactor. It depends on NADPH as a cofactor. Mg(2+) is required as a cofactor.

The protein resides in the cytoplasm. The catalysed reaction is isopentenyl diphosphate = dimethylallyl diphosphate. In terms of biological role, involved in the biosynthesis of isoprenoids. Catalyzes the 1,3-allylic rearrangement of the homoallylic substrate isopentenyl (IPP) to its allylic isomer, dimethylallyl diphosphate (DMAPP). This Streptococcus pneumoniae (strain ATCC BAA-255 / R6) protein is Isopentenyl-diphosphate delta-isomerase.